Reading from the N-terminus, the 452-residue chain is MHQRALLFSALAVAANAQQVGTQKPETHPPLTWQKCTAAGSCSQQSGSVVIDANWRWLHSTKDTTNCYTGNTWNTELCPDNESCAQNCAVDGADYAGTYGVTTSGSELKLSFVTGANVGSRLYLMQDDETYQHFNLLNNEFTFDVDVSNLPCGLNGALYFVAMDADGGMSKYPSNKAGAKYGTGYCDSQCPRDLKFINGMANVEGWKPSSNDKNAGVGGHGSCCPEMDIWEANSISTAVTPHPCDDVSQTMCSGDACGGTYSATRYAGTCDPDGCDFNPFRMGNESFYGPGKIVDTKSEMTVVTQFITADGTDTGALSEIKRLYVQNGKVIANSVSNVADVSGNSISSDFCTAQKKAFGDEDIFAKHGGLSGMGKALSEMVLIMSIWDDHHSSMMWLDSTYPTDADPSKPGVARGTCEHGAGDPEKVESQHPDASVTFSNIKFGPIGSTYKA.

A signal peptide spans 1–17 (MHQRALLFSALAVAANA). N-linked (GlcNAc...) asparagine glycosylation is present at asparagine 81. Glutamate 226 acts as the Nucleophile in catalysis. Glutamate 231 functions as the Proton donor in the catalytic mechanism. Asparagine 284 is a glycosylation site (N-linked (GlcNAc...) asparagine). Residues 406–432 (DPSKPGVARGTCEHGAGDPEKVESQHP) form a disordered region. The span at 416–431 (TCEHGAGDPEKVESQH) shows a compositional bias: basic and acidic residues.

It belongs to the glycosyl hydrolase 7 (cellulase C) family.

The protein resides in the secreted. It carries out the reaction Hydrolysis of (1-&gt;4)-beta-D-glucosidic linkages in cellulose and cellotetraose, releasing cellobiose from the non-reducing ends of the chains.. Functionally, the biological conversion of cellulose to glucose generally requires three types of hydrolytic enzymes: (1) Endoglucanases which cut internal beta-1,4-glucosidic bonds; (2) Exocellobiohydrolases that cut the disaccharide cellobiose from the non-reducing end of the cellulose polymer chain; (3) Beta-1,4-glucosidases which hydrolyze the cellobiose and other short cello-oligosaccharides to glucose. The sequence is that of Probable 1,4-beta-D-glucan cellobiohydrolase A (cbhA) from Neosartorya fischeri (strain ATCC 1020 / DSM 3700 / CBS 544.65 / FGSC A1164 / JCM 1740 / NRRL 181 / WB 181) (Aspergillus fischerianus).